The primary structure comprises 72 residues: Large ribosomal subunit protein bL31 (72 aa).

Residues cysteine 16, cysteine 18, cysteine 37, and cysteine 40 each coordinate Zn(2+).

Belongs to the bacterial ribosomal protein bL31 family. Type A subfamily. Part of the 50S ribosomal subunit. Zn(2+) serves as cofactor.

Binds the 23S rRNA. The chain is Large ribosomal subunit protein bL31 from Idiomarina loihiensis (strain ATCC BAA-735 / DSM 15497 / L2-TR).